The primary structure comprises 491 residues: Cytochrome P450 2B2 (491 aa).

Position 128 is a phosphoserine; by PKA (serine 128). Cysteine 436 provides a ligand contact to heme.

It belongs to the cytochrome P450 family. It depends on heme as a cofactor. Phosphorylation is accompanied by a decrease in enzyme activity.

It is found in the endoplasmic reticulum membrane. The protein resides in the microsome membrane. The enzyme catalyses an organic molecule + reduced [NADPH--hemoprotein reductase] + O2 = an alcohol + oxidized [NADPH--hemoprotein reductase] + H2O + H(+). In terms of biological role, cytochromes P450 are a group of heme-thiolate monooxygenases. In liver microsomes, this enzyme is involved in an NADPH-dependent electron transport pathway. It oxidizes a variety of structurally unrelated compounds, including steroids, fatty acids, and xenobiotics. In Rattus norvegicus (Rat), this protein is Cytochrome P450 2B2 (Cyp2b2).